The primary structure comprises 647 residues: A-type voltage-gated potassium channel KCND1 (647 aa).

Topologically, residues 1 to 183 (MAAGVATWLP…RAFENPHTST (183 aa)) are cytoplasmic. Residues 2-20 (AAGVATWLPFARAAAVGWL) are interaction with KCNIP1, KCNIP2, and other family members. 3 residues coordinate Zn(2+): His104, Cys131, and Cys132. The disordered stretch occupies residues 144-164 (AQRLAEDEEAEQTGDGPALPA). Residues 184-205 (AALVFYYVTGFFIAVSVIANVV) form a helical membrane-spanning segment. Residues 206-230 (ETIPCRGPARRPPREQPCGDRFPLA) are Extracellular-facing. The helical transmembrane segment at 231-252 (FFCMDTACVLIFTGEYLLRLFA) threads the bilayer. Residues 253–263 (APSRCRFLRSV) are Cytoplasmic-facing. Residues 264–284 (MSLIDVVAILPYYIGLLVPKN) form a helical membrane-spanning segment. At 285–287 (EDV) the chain is on the extracellular side. A helical; Voltage-sensor transmembrane segment spans residues 288-308 (SGAFVTLRVFRVFRIFKFSRH). Residues 309 to 323 (SQGLRILGYTLKSCA) lie on the Cytoplasmic side of the membrane. Residues 310–323 (QGLRILGYTLKSCA) are S4-S5 linker. A helical membrane pass occupies residues 324–345 (SELGFLLFSLTMAIIIFATVMF). Topologically, residues 346 to 359 (YAEKGTSKTNFTSI) are extracellular. The helical intramembrane region spans 360 to 371 (PAAFWYTIVTMT). Positions 372–377 (TLGYGD) match the Selectivity filter motif. The stretch at 372–379 (TLGYGDMV) is an intramembrane region. The Extracellular segment spans residues 380–386 (PSTIAGK). The chain crosses the membrane as a helical span at residues 387–415 (IFGSICSLSGVLVIALPVPVIVSNFSRIY). Topologically, residues 416–647 (HQNQRADKRR…LPETVKISSL (232 aa)) are cytoplasmic. Positions 474–489 (FEQQHHHLLHCLEKTT) are required for dendritic targeting. A compositionally biased stretch (low complexity) spans 510–520 (GRTSRSTSVSS). Positions 510–531 (GRTSRSTSVSSQPVGPSSLLSS) are disordered. Over residues 521–530 (QPVGPSSLLS) the composition is skewed to polar residues. A Phosphoserine modification is found at Ser555. 2 disordered regions span residues 564–584 (GLRRSPGPQSRSSLNAKPHDS) and 601–634 (IPTPPANTPDESQPSSPGGGGRASSTLRNSRLGT).

Belongs to the potassium channel family. D (Shal) (TC 1.A.1.2) subfamily. Kv4.1/KCND1 sub-subfamily. As to quaternary structure, component of heteromultimeric potassium channels. Identified in potassium channel complexes containing KCND1, KCND2, KCND3, KCNIP1, KCNIP2, KCNIP3, KCNIP4, DPP6 and DPP10. As to expression, detected in carotid body chemoreceptor cells and in frontal cortex.

The protein localises to the cell membrane. The enzyme catalyses K(+)(in) = K(+)(out). Its function is as follows. A-type voltage-gated potassium channel that mediates transmembrane potassium transport in excitable membranes in the brain. Mediates A-type current I(SA) in suprachiasmatic nucleus (SCN) neurons. Exhibits a low-threshold A-type current with a hyperpolarized steady-state inactivation midpoint and the recovery process was steeply voltage-dependent, with recovery being markedly faster at more negative potentials. May regulates repetitive firing rates in the suprachiasmatic nucleus (SCN) neurons and circadian rhythms in neuronal excitability and behavior. Contributes to the regulation of the circadian rhythm of action potential firing in suprachiasmatic nucleus neurons, which regulates the circadian rhythm of locomotor activity. The regulatory subunit KCNIP1 modulates the kinetics of channel inactivation, increases the current amplitudes and accelerates recovery from inactivation, shifts activation in a depolarizing direction. The regulatory subunit DPP10 decreases the voltage sensitivity of the inactivation channel gating. In Oryctolagus cuniculus (Rabbit), this protein is A-type voltage-gated potassium channel KCND1.